Consider the following 78-residue polypeptide: Cytochrome c oxidase subunit 6b-3 (78 aa).

The 44-residue stretch at 22–65 folds into the CHCH domain; that stretch reads TRHCFTRYIEFHRCTTAKGEDANECERFAKYYRALCPGEWVDKW. Residues 25–35 carry the Cx9C motif motif; it reads CFTRYIEFHRC. Intrachain disulfides connect cysteine 25-cysteine 57 and cysteine 35-cysteine 46. The Cx10C motif signature appears at 46 to 57; sequence CERFAKYYRALC.

This sequence belongs to the cytochrome c oxidase subunit 6B (TC 3.D.4.8) family. In terms of tissue distribution, expressed in the whole plant.

The protein localises to the mitochondrion. Functionally, this protein is one of the nuclear-coded polypeptide chains of cytochrome c oxidase, the terminal oxidase in mitochondrial electron transport. This protein may be one of the heme-binding subunits of the oxidase. This is Cytochrome c oxidase subunit 6b-3 (COX6B-3) from Arabidopsis thaliana (Mouse-ear cress).